A 102-amino-acid chain; its full sequence is Large ribosomal subunit protein bL21 (102 aa).

Belongs to the bacterial ribosomal protein bL21 family. Part of the 50S ribosomal subunit. Contacts protein L20.

In terms of biological role, this protein binds to 23S rRNA in the presence of protein L20. The protein is Large ribosomal subunit protein bL21 of Bacillus velezensis (strain DSM 23117 / BGSC 10A6 / LMG 26770 / FZB42) (Bacillus amyloliquefaciens subsp. plantarum).